Here is a 339-residue protein sequence, read N- to C-terminus: Methionine import ATP-binding protein MetN 2 (339 aa).

The ABC transporter domain maps to 2–241 (ISFNNVSKVY…PKTTTTQNFV (240 aa)). 38 to 45 (GFSGAGKS) contributes to the ATP binding site.

The protein belongs to the ABC transporter superfamily. Methionine importer (TC 3.A.1.24) family. In terms of assembly, the complex is composed of two ATP-binding proteins (MetN), two transmembrane proteins (MetI) and a solute-binding protein (MetQ).

The protein localises to the cell membrane. It carries out the reaction L-methionine(out) + ATP + H2O = L-methionine(in) + ADP + phosphate + H(+). It catalyses the reaction D-methionine(out) + ATP + H2O = D-methionine(in) + ADP + phosphate + H(+). In terms of biological role, part of the ABC transporter complex MetNIQ involved in methionine import. Responsible for energy coupling to the transport system. The polypeptide is Methionine import ATP-binding protein MetN 2 (Bacillus anthracis).